The chain runs to 63 residues: Prokaryotic ubiquitin-like protein Pup (63 aa).

Residues methionine 1 to alanine 11 are compositionally biased toward polar residues. The tract at residues methionine 1 to isoleucine 28 is disordered. The tract at residues glutamate 19–phenylalanine 57 is ARC ATPase binding. An Isoglutamyl lysine isopeptide (Glu-Lys) (interchain with K-? in acceptor proteins) cross-link involves residue glutamate 63.

Belongs to the prokaryotic ubiquitin-like protein family. Strongly interacts with the proteasome-associated ATPase ARC through a hydrophobic interface; the interacting region of Pup lies in its C-terminal half. There is one Pup binding site per ARC hexamer ring.

It functions in the pathway protein degradation; proteasomal Pup-dependent pathway. Its function is as follows. Protein modifier that is covalently attached to lysine residues of substrate proteins, thereby targeting them for proteasomal degradation. The tagging system is termed pupylation. The polypeptide is Prokaryotic ubiquitin-like protein Pup (pup) (Bifidobacterium adolescentis (strain ATCC 15703 / DSM 20083 / NCTC 11814 / E194a)).